The chain runs to 173 residues: ADP-ribose 1''-phosphate phosphatase (173 aa).

The 173-residue stretch at 1-173 (MIRYIKGDLL…YDVEFNVYVI (173 aa)) folds into the Macro domain. Substrate-binding positions include 7-9 (GDL), 26-28 (ACN), 33-38 (WGGGIA), and 145-151 (INAGIFA).

Belongs to the POA1 family.

The catalysed reaction is ADP-alpha-D-ribose 1''-phosphate + H2O = ADP-D-ribose + phosphate. Its function is as follows. Highly specific phosphatase involved in the metabolism of ADP-ribose 1''-phosphate (Appr1p) which is produced as a consequence of tRNA splicing. In Scheffersomyces stipitis (strain ATCC 58785 / CBS 6054 / NBRC 10063 / NRRL Y-11545) (Yeast), this protein is ADP-ribose 1''-phosphate phosphatase (POA1).